A 311-amino-acid polypeptide reads, in one-letter code: MQRFIKWLAVITSLDLLIVLLGGALVTKTGSGQGCGKSWPLCNGEFVPSNLSMETIIELSHRLTSGSAGILVTLLCILSWKYYKHVRETKTLAILSFVFLVAQALMGAAAVVWGQMPAVLAIHFGISLISFASVILLTCLIFEIDQKFDARSLIMDKKMKFHIYGVTIYSYIVVYTGALVRHERASLACPDFPLCSKNRPMPTQLHEWVQMGHRVAAMLIFAWILYAMILAIRHYKQQPVVYWGWIISFILVTLQAVVGVLVVFTNASLAMALLHSLFISCLFAVLCYLVMLGTRSKVNAKEAELTSKQTK.

The Cytoplasmic segment spans residues 1–6 (MQRFIK). Residues 7–27 (WLAVITSLDLLIVLLGGALVT) traverse the membrane as a helical segment. The Extracellular segment spans residues 28–62 (KTGSGQGCGKSWPLCNGEFVPSNLSMETIIELSHR). The cysteines at positions 35 and 42 are disulfide-linked. Residue glutamate 58 is part of the active site. Histidine 61 provides a ligand contact to heme o. Residues 63 to 83 (LTSGSAGILVTLLCILSWKYY) traverse the membrane as a helical segment. Residues 84–91 (KHVRETKT) lie on the Cytoplasmic side of the membrane. Residues 92–112 (LAILSFVFLVAQALMGAAAVV) form a helical membrane-spanning segment. The Extracellular portion of the chain corresponds to 113–121 (WGQMPAVLA). The helical transmembrane segment at 122–142 (IHFGISLISFASVILLTCLIF) threads the bilayer. Heme o is bound at residue histidine 123. Residues 143-159 (EIDQKFDARSLIMDKKM) are Cytoplasmic-facing. A helical membrane pass occupies residues 160 to 180 (KFHIYGVTIYSYIVVYTGALV). Residues 181–211 (RHERASLACPDFPLCSKNRPMPTQLHEWVQM) are Extracellular-facing. Cysteine 189 and cysteine 195 are joined by a disulfide. A helical membrane pass occupies residues 212 to 232 (GHRVAAMLIFAWILYAMILAI). Residue histidine 213 participates in heme b binding. The Cytoplasmic portion of the chain corresponds to 233 to 243 (RHYKQQPVVYW). Residues 244-264 (GWIISFILVTLQAVVGVLVVF) form a helical membrane-spanning segment. At 265–271 (TNASLAM) the chain is on the extracellular side. Residues 272-292 (ALLHSLFISCLFAVLCYLVML) form a helical membrane-spanning segment. Residue histidine 275 coordinates heme b. At 293-311 (GTRSKVNAKEAELTSKQTK) the chain is on the cytoplasmic side.

Belongs to the COX15/CtaA family. Type 1 subfamily. As to quaternary structure, interacts with CtaB. It depends on heme b as a cofactor.

It localises to the cell membrane. The catalysed reaction is Fe(II)-heme o + 2 A + H2O = Fe(II)-heme a + 2 AH2. The protein operates within porphyrin-containing compound metabolism; heme A biosynthesis; heme A from heme O: step 1/1. In terms of biological role, catalyzes the conversion of heme O to heme A by two successive hydroxylations of the methyl group at C8. The first hydroxylation forms heme I, the second hydroxylation results in an unstable dihydroxymethyl group, which spontaneously dehydrates, resulting in the formyl group of heme A. This is Heme A synthase from Bacillus cereus (strain ATCC 14579 / DSM 31 / CCUG 7414 / JCM 2152 / NBRC 15305 / NCIMB 9373 / NCTC 2599 / NRRL B-3711).